We begin with the raw amino-acid sequence, 209 residues long: Inner membrane protein YjdF (209 aa).

The Periplasmic portion of the chain corresponds to 1-7; sequence MTRTLKP. Residues 8–28 form a helical membrane-spanning segment; it reads LILNTSALTLTLILIYTGISA. Over 29 to 31 the chain is Cytoplasmic; that stretch reads HDK. The helical transmembrane segment at 32 to 52 threads the bilayer; it reads LTWLMEVTPVIIVVQLLLATA. Topologically, residues 53–55 are periplasmic; it reads RRY. The helical transmembrane segment at 56-76 threads the bilayer; sequence PLTPLLYTLIFLHAIILMVGG. The Cytoplasmic segment spans residues 77–131; it reads QYTYAKVPVGFEVQEWLGLSRNPYDKLGHFFQGLVPALVAREILVRGMYVRGRKM. The chain crosses the membrane as a helical span at residues 132–152; that stretch reads VAFLVCCVALAISAMYELIEW. At 153–177 the chain is on the periplasmic side; the sequence is WAALAMGQGADDFLGTQGDQWDTQS. The chain crosses the membrane as a helical span at residues 178 to 198; it reads DMFCALLGALTTVIFLARFHC. The Cytoplasmic segment spans residues 199-209; the sequence is RQLRRFGLITG.

It is found in the cell inner membrane. The chain is Inner membrane protein YjdF (yjdF) from Escherichia coli (strain K12).